A 445-amino-acid chain; its full sequence is Histone acetyltransferase of the MYST family 1 (445 aa).

The Tudor-knot domain occupies 60–118 (LEVGTRVMCQWRDGKYHPVKVIERRKNYNGGHNDYEYYVHYTEFNRRLDEWIKLEQLDL). The 272-residue stretch at 169–440 (TKVKNIATIE…VDVSKMIWTP (272 aa)) folds into the MYST-type HAT domain. The C2HC MYST-type zinc-finger motif lies at 202–227 (LFFCEFCLSFMKRKEQLQRHMRKCDL). N6-acetyllysine; by autocatalysis is present on K269. Acetyl-CoA is bound by residues 312-314 (ILT) and 319-325 (QRKGYGK). E345 (proton donor/acceptor) is an active-site residue. An acetyl-CoA-binding site is contributed by S349.

Belongs to the MYST (SAS/MOZ) family. Interacts with MRG1 and MRG2. Component of the NuA4 histone acetyltransferase complex. In terms of processing, autoacetylation at Lys-269 is required for proper function. In terms of tissue distribution, expressed in cotyledons, leaves, stems, roots and, at higher levels in developing flowers, particularly in the anthers and gynoecia. Constitutively expressed in all tissues, predominantly in shoot apical meristem.

It localises to the nucleus. The enzyme catalyses L-lysyl-[protein] + acetyl-CoA = N(6)-acetyl-L-lysyl-[protein] + CoA + H(+). In terms of biological role, histone acetyltransferase which may be involved in transcriptional activation. Acetylates 'Lys-5' of histone H4 (H4K5ac). Essential for gametophyte development. Involved in DNA repair after UV-B exposure. Negative regulator of flowering controlling the H4K5ac levels in the FLC chromatin. This Arabidopsis thaliana (Mouse-ear cress) protein is Histone acetyltransferase of the MYST family 1.